Consider the following 176-residue polypeptide: Adenine phosphoribosyltransferase (176 aa).

The protein belongs to the purine/pyrimidine phosphoribosyltransferase family. As to quaternary structure, homodimer.

Its subcellular location is the cytoplasm. It catalyses the reaction AMP + diphosphate = 5-phospho-alpha-D-ribose 1-diphosphate + adenine. Its pathway is purine metabolism; AMP biosynthesis via salvage pathway; AMP from adenine: step 1/1. Functionally, catalyzes a salvage reaction resulting in the formation of AMP, that is energically less costly than de novo synthesis. The chain is Adenine phosphoribosyltransferase from Bacteroides thetaiotaomicron (strain ATCC 29148 / DSM 2079 / JCM 5827 / CCUG 10774 / NCTC 10582 / VPI-5482 / E50).